The chain runs to 713 residues: B3 domain-containing transcription factor VAL3 (713 aa).

The TF-B3 DNA-binding region spans 328–427; it reads FEKILSATDT…KLILGFRKAS (100 aa). Disordered regions lie at residues 459–478 and 616–713; these read VECS…SKRQ and LNSD…TSSM. A compositionally biased stretch (basic residues) spans 464 to 477; the sequence is GKKKSSMMITRSKR. Over residues 616 to 629 the composition is skewed to polar residues; it reads LNSDNGLHQSANNS. The segment covering 663 to 674 has biased composition (basic and acidic residues); it reads TKSETLPHDDTV. Residues 676–688 are compositionally biased toward low complexity; that stretch reads SSFTSPSSSSAHS. Residues 690–700 are compositionally biased toward basic and acidic residues; it reads NNKEDEGKLKT. Residues 701–713 show a composition bias toward low complexity; that stretch reads TTEIADTTTTSSM.

It is found in the nucleus. Its function is as follows. May be involved in plant development. The sequence is that of B3 domain-containing transcription factor VAL3 (VAL3) from Arabidopsis thaliana (Mouse-ear cress).